Reading from the N-terminus, the 709-residue chain is MSRVLHPIFLFGKTSFLYSGCSKFGGRLFNNSIVHGWLRTRSYALASGLHPLRKQKLAHFEDLANANMSDPYMQAKLYKELADNFPEAIISRYETQGVARNSACDRYYQEALRKKSWSRSLSNNISLSQSSSSPATSSFSDPKAFSAGVPKFTSDTSSTVSSTPSLNHSLQNSMPPSTPTPPPVWAPTIVSSALGTSSKTPVYVVVDEPRFTKFFRIFKFIAGLSVASYFVLLGMSIFAETSGLNNIMTNTTEQEPMEERAINVRFSDVQGVDEAKEELEEIVDFLRDPTHFTRLGGKLPRGVLLTGPPGTGKTMLARAVAGEANVPFFFMSGSQFDEMYVGVGAKRVRELFAAARKQAPSIIFIDELDAIGQKRNARDAAHMRQTLNQLLVDLDGFSKNEDLAHPVVFIGATNFPESLDPALTRPGRFDRHIHVPLPDVRGRLAILLQHTRHVPLGKDVDLSIIARGTSGFAGADLANLINQAAVYASKNLSTAVSMRDLEWSKDRILMGAERKSAFITPENKLMTAYHEGGHALVALFTKNAMRPYKATIMPRGSSLGMTISLPDMDKDSWTREEYLAMLDVTMGGRAAEELLYGKDKITSGAHNDIDKATQVARRMVTEFGMSDRIGPVSLEAEMDNLSPATRALVESEIKSLLEASYERSLSLLKSHKKELDALATALVDYEFLTAEEMNRVVKGDRDLLRNKLS.

Positions 152–182 (FTSDTSSTVSSTPSLNHSLQNSMPPSTPTPP) are disordered. Positions 153–165 (TSDTSSTVSSTPS) are enriched in low complexity. A helical membrane pass occupies residues 217–239 (IFKFIAGLSVASYFVLLGMSIFA). 307 to 314 (GPPGTGKT) is a binding site for ATP. His-530 serves as a coordination point for Zn(2+). Glu-531 is a catalytic residue. Zn(2+)-binding residues include His-534 and Asp-608.

In the N-terminal section; belongs to the AAA ATPase family. It in the C-terminal section; belongs to the peptidase M41 family. The cofactor is Zn(2+).

Its subcellular location is the mitochondrion membrane. Its function is as follows. Putative ATP-dependent protease. The protein is ATP-dependent zinc metalloprotease YME1 homolog of Schizosaccharomyces pombe (strain 972 / ATCC 24843) (Fission yeast).